Here is a 230-residue protein sequence, read N- to C-terminus: Leucyl/phenylalanyl-tRNA--protein transferase (230 aa).

The protein belongs to the L/F-transferase family.

It localises to the cytoplasm. The enzyme catalyses N-terminal L-lysyl-[protein] + L-leucyl-tRNA(Leu) = N-terminal L-leucyl-L-lysyl-[protein] + tRNA(Leu) + H(+). It catalyses the reaction N-terminal L-arginyl-[protein] + L-leucyl-tRNA(Leu) = N-terminal L-leucyl-L-arginyl-[protein] + tRNA(Leu) + H(+). It carries out the reaction L-phenylalanyl-tRNA(Phe) + an N-terminal L-alpha-aminoacyl-[protein] = an N-terminal L-phenylalanyl-L-alpha-aminoacyl-[protein] + tRNA(Phe). Its function is as follows. Functions in the N-end rule pathway of protein degradation where it conjugates Leu, Phe and, less efficiently, Met from aminoacyl-tRNAs to the N-termini of proteins containing an N-terminal arginine or lysine. This Hamiltonella defensa subsp. Acyrthosiphon pisum (strain 5AT) protein is Leucyl/phenylalanyl-tRNA--protein transferase.